Reading from the N-terminus, the 485-residue chain is Argininosuccinate lyase (485 aa).

The protein belongs to the lyase 1 family. Argininosuccinate lyase subfamily.

The protein resides in the cytoplasm. The enzyme catalyses 2-(N(omega)-L-arginino)succinate = fumarate + L-arginine. The protein operates within amino-acid biosynthesis; L-arginine biosynthesis; L-arginine from L-ornithine and carbamoyl phosphate: step 3/3. The chain is Argininosuccinate lyase from Halobacterium salinarum (strain ATCC 29341 / DSM 671 / R1).